The chain runs to 113 residues: Replication initiation control protein YabA (113 aa).

Residues histidine 86, cysteine 88, cysteine 102, and cysteine 105 each contribute to the Zn(2+) site.

The protein belongs to the YabA family. In terms of assembly, homotetramer. Interacts with both DnaA and DnaN, acting as a bridge between these two proteins. Zn(2+) is required as a cofactor.

It is found in the cytoplasm. It localises to the nucleoid. Functionally, involved in control of chromosome replication initiation. Inhibits the cooperative binding of DnaA to the oriC region, thus negatively regulating initiation of chromosome replication. Inhibits the ability of DnaA-ATP to form a helix on DNA; does not disassemble preformed DnaA-DNA helices. Decreases the residence time of DnaA on the chromosome at its binding sites (oriC, replication forks and promoter-binding sites). Tethers DnaA to the replication machinery via the DNA polymerase beta sliding clamp subunit (dnaN). Associates with oriC and other DnaA targets on the chromosome in a DnaA-dependent manner. This is Replication initiation control protein YabA from Pediococcus pentosaceus (strain ATCC 25745 / CCUG 21536 / LMG 10740 / 183-1w).